Consider the following 297-residue polypeptide: Phosphoribosylaminoimidazole-succinocarboxamide synthase (297 aa).

It belongs to the SAICAR synthetase family.

It carries out the reaction 5-amino-1-(5-phospho-D-ribosyl)imidazole-4-carboxylate + L-aspartate + ATP = (2S)-2-[5-amino-1-(5-phospho-beta-D-ribosyl)imidazole-4-carboxamido]succinate + ADP + phosphate + 2 H(+). The protein operates within purine metabolism; IMP biosynthesis via de novo pathway; 5-amino-1-(5-phospho-D-ribosyl)imidazole-4-carboxamide from 5-amino-1-(5-phospho-D-ribosyl)imidazole-4-carboxylate: step 1/2. This Mycobacterium sp. (strain JLS) protein is Phosphoribosylaminoimidazole-succinocarboxamide synthase.